The sequence spans 95 residues: Acylphosphatase (95 aa).

The Acylphosphatase-like domain maps to Arg-5–Pro-93. Residues Arg-20 and Asn-38 contribute to the active site.

The protein belongs to the acylphosphatase family.

It carries out the reaction an acyl phosphate + H2O = a carboxylate + phosphate + H(+). The sequence is that of Acylphosphatase (acyP) from Pyrobaculum arsenaticum (strain DSM 13514 / JCM 11321 / PZ6).